The following is a 381-amino-acid chain: MRFLDAGETHGRCLVGIIEGFPANVKINIDNINRLLELRQRGYGRGKRMEIEKDKATILSGVRNSYTTGAPITIMIENRDYVNWQKYMDPILCDTMTKKVTVPRPGHADLPGCLKYGFDDARPVLERASARETAMRVAIGALCEELLNVFGIKLYNHVVEIGGVRIKKEYSTDDVNLFEEAENSDLFCIDKEAENDMKQVIDSAKEAGDSVGGVAEVICKNVPFGLGSHVHWDRKLDGLLAQAVMSIQSVKGVEIGMGFEVSRRFGSEVHDEIFYDDQKGFYRKTNNAGGIEGGISNGMDIVIRAAFKPIPTLYKPLRSVDLQGLKEKEAAVERSDTCAVPAGSVVMRAAVAYVLANSLIDRLSGDSLDIMIDNYKRLYQK.

NADP(+) is bound by residues Arg-39 and Arg-45. FMN contacts are provided by residues 127–129 (RAS), 248–249 (QS), Gly-293, 308–312 (KPIPT), and Arg-334.

This sequence belongs to the chorismate synthase family. As to quaternary structure, homotetramer. Requires FMNH2 as cofactor.

It catalyses the reaction 5-O-(1-carboxyvinyl)-3-phosphoshikimate = chorismate + phosphate. The protein operates within metabolic intermediate biosynthesis; chorismate biosynthesis; chorismate from D-erythrose 4-phosphate and phosphoenolpyruvate: step 7/7. Catalyzes the anti-1,4-elimination of the C-3 phosphate and the C-6 proR hydrogen from 5-enolpyruvylshikimate-3-phosphate (EPSP) to yield chorismate, which is the branch point compound that serves as the starting substrate for the three terminal pathways of aromatic amino acid biosynthesis. This reaction introduces a second double bond into the aromatic ring system. The chain is Chorismate synthase from Caldicellulosiruptor saccharolyticus (strain ATCC 43494 / DSM 8903 / Tp8T 6331).